Reading from the N-terminus, the 292-residue chain is Probable septum site-determining protein MinC (292 aa).

The tract at residues 109–188 is disordered; sequence QVIDTAPPND…PQSSSALVIT (80 aa). Positions 140–150 are enriched in acidic residues; sequence QDDEADGEQAD. The segment covering 171-185 has biased composition (polar residues); sequence ANRPTATPPQSSSAL.

It belongs to the MinC family. As to quaternary structure, interacts with MinD and FtsZ.

In terms of biological role, cell division inhibitor that blocks the formation of polar Z ring septums. Rapidly oscillates between the poles of the cell to destabilize FtsZ filaments that have formed before they mature into polar Z rings. Prevents FtsZ polymerization. This is Probable septum site-determining protein MinC from Bordetella pertussis (strain Tohama I / ATCC BAA-589 / NCTC 13251).